The following is a 108-amino-acid chain: UPF0145 protein YjfJ (108 aa).

The protein belongs to the UPF0145 family.

In Lactococcus lactis subsp. lactis (strain IL1403) (Streptococcus lactis), this protein is UPF0145 protein YjfJ (yjfJ).